The sequence spans 470 residues: 3-isopropylmalate dehydratase large subunit (470 aa).

[4Fe-4S] cluster contacts are provided by Cys-349, Cys-410, and Cys-413.

The protein belongs to the aconitase/IPM isomerase family. LeuC type 1 subfamily. In terms of assembly, heterodimer of LeuC and LeuD. Requires [4Fe-4S] cluster as cofactor.

It catalyses the reaction (2R,3S)-3-isopropylmalate = (2S)-2-isopropylmalate. It functions in the pathway amino-acid biosynthesis; L-leucine biosynthesis; L-leucine from 3-methyl-2-oxobutanoate: step 2/4. Functionally, catalyzes the isomerization between 2-isopropylmalate and 3-isopropylmalate, via the formation of 2-isopropylmaleate. The sequence is that of 3-isopropylmalate dehydratase large subunit from Nitrosomonas europaea (strain ATCC 19718 / CIP 103999 / KCTC 2705 / NBRC 14298).